Reading from the N-terminus, the 114-residue chain is Ribonuclease P protein component (114 aa).

The protein belongs to the RnpA family. As to quaternary structure, consists of a catalytic RNA component (M1 or rnpB) and a protein subunit.

It catalyses the reaction Endonucleolytic cleavage of RNA, removing 5'-extranucleotides from tRNA precursor.. RNaseP catalyzes the removal of the 5'-leader sequence from pre-tRNA to produce the mature 5'-terminus. It can also cleave other RNA substrates such as 4.5S RNA. The protein component plays an auxiliary but essential role in vivo by binding to the 5'-leader sequence and broadening the substrate specificity of the ribozyme. In Borrelia turicatae (strain 91E135), this protein is Ribonuclease P protein component.